A 230-amino-acid polypeptide reads, in one-letter code: Orotidine 5'-phosphate decarboxylase (230 aa).

Substrate is bound by residues D10, K31, 58 to 67 (DLKLHDIPNT), T117, R179, Q188, G208, and R209. The active-site Proton donor is the K60.

Belongs to the OMP decarboxylase family. Type 1 subfamily. As to quaternary structure, homodimer.

It carries out the reaction orotidine 5'-phosphate + H(+) = UMP + CO2. The protein operates within pyrimidine metabolism; UMP biosynthesis via de novo pathway; UMP from orotate: step 2/2. Catalyzes the decarboxylation of orotidine 5'-monophosphate (OMP) to uridine 5'-monophosphate (UMP). The sequence is that of Orotidine 5'-phosphate decarboxylase from Staphylococcus haemolyticus (strain JCSC1435).